The primary structure comprises 367 residues: Apolipoprotein A-V (367 aa).

Residues 1-20 form the signal peptide; it reads MVAVLTWALALLSAFATAQT. Ser56 bears the Phosphoserine mark.

The protein belongs to the apolipoprotein A1/A4/E family. In terms of assembly, interacts with GPIHBP1. Interacts with SORL1; this interaction leads to APOA5 internalization and sorting either to lysosomes and degradation, or to the trans-Golgi network. Phosphorylated by FAM20C in the extracellular medium.

It is found in the secreted. It localises to the early endosome. The protein localises to the late endosome. Its subcellular location is the golgi apparatus. The protein resides in the trans-Golgi network. Functionally, minor apolipoprotein mainly associated with HDL and to a lesser extent with VLDL. May also be associated with chylomicrons. Important determinant of plasma triglyceride (TG) levels by both being a potent stimulator of apo-CII lipoprotein lipase (LPL) TG hydrolysis and an inhibitor of the hepatic VLDL-TG production rate (without affecting the VLDL-apoB production rate). Activates poorly lecithin:cholesterol acyltransferase (LCAT) and does not enhance efflux of cholesterol from macrophages. Binds heparin. This Phoca vitulina (Harbor seal) protein is Apolipoprotein A-V (APOA5).